A 397-amino-acid chain; its full sequence is Phosphoglycerate kinase (397 aa).

Residues 25-27 (DLN), R41, 64-67 (HLGR), R118, and R151 contribute to the substrate site. ATP is bound by residues K202, E324, and 350–353 (GGDT).

This sequence belongs to the phosphoglycerate kinase family. As to quaternary structure, monomer.

The protein localises to the cytoplasm. It carries out the reaction (2R)-3-phosphoglycerate + ATP = (2R)-3-phospho-glyceroyl phosphate + ADP. Its pathway is carbohydrate degradation; glycolysis; pyruvate from D-glyceraldehyde 3-phosphate: step 2/5. The chain is Phosphoglycerate kinase from Paracidovorax citrulli (strain AAC00-1) (Acidovorax citrulli).